Reading from the N-terminus, the 145-residue chain is Dihydrolipoyllysine-residue succinyltransferase component of 2-oxoglutarate dehydrogenase complex, mitochondrial (145 aa).

Positions 4–31 (ITVQTPAFAESVTEGDVRVEGGTPLFTL) constitute a Lipoyl-binding domain. Ser-14 bears the Phosphoserine mark. An N6-acetyllysine mark is found at Lys-36 and Lys-66. Catalysis depends on residues His-119 and Asp-123.

This sequence belongs to the 2-oxoacid dehydrogenase family. The 2-oxoglutarate dehydrogenase complex is composed of OGDH (2-oxoglutarate dehydrogenase; E1), DLST (dihydrolipoamide succinyltransferase; E2), DLD (dihydrolipoamide dehydrogenase; E3) and the assembly factor KGD4. It contains multiple copies of the three enzymatic components (E1, E2 and E3). In the nucleus, the 2-oxoglutarate dehydrogenase complex associates with KAT2A. Interacts with ABHD11; this interaction maintains the functional lipoylation of the 2-oxoglutarate dehydrogenase complex. Requires (R)-lipoate as cofactor.

Its subcellular location is the mitochondrion matrix. It localises to the nucleus. It catalyses the reaction N(6)-[(R)-dihydrolipoyl]-L-lysyl-[protein] + succinyl-CoA = N(6)-[(R)-S(8)-succinyldihydrolipoyl]-L-lysyl-[protein] + CoA. Its pathway is amino-acid degradation; L-lysine degradation via saccharopine pathway; glutaryl-CoA from L-lysine: step 6/6. It functions in the pathway carbohydrate metabolism; tricarboxylic acid cycle. Dihydrolipoamide succinyltransferase (E2) component of the 2-oxoglutarate dehydrogenase complex. The 2-oxoglutarate dehydrogenase complex catalyzes the overall conversion of 2-oxoglutarate to succinyl-CoA and CO(2). The 2-oxoglutarate dehydrogenase complex is mainly active in the mitochondrion. A fraction of the 2-oxoglutarate dehydrogenase complex also localizes in the nucleus and is required for lysine succinylation of histones: associates with KAT2A on chromatin and provides succinyl-CoA to histone succinyltransferase KAT2A. This Mesocricetus auratus (Golden hamster) protein is Dihydrolipoyllysine-residue succinyltransferase component of 2-oxoglutarate dehydrogenase complex, mitochondrial.